The primary structure comprises 66 residues: Large ribosomal subunit protein bL31 (66 aa).

The Zn(2+) site is built by cysteine 16, cysteine 18, cysteine 36, and cysteine 39.

The protein belongs to the bacterial ribosomal protein bL31 family. Type A subfamily. Part of the 50S ribosomal subunit. Zn(2+) is required as a cofactor.

Functionally, binds the 23S rRNA. The chain is Large ribosomal subunit protein bL31 from Geobacter metallireducens (strain ATCC 53774 / DSM 7210 / GS-15).